The chain runs to 135 residues: DNA-directed RNA polymerase subunit omega (135 aa).

The disordered stretch occupies residues 84–106; that stretch reads IAGHSSHVSPSRSSRHTGLGKSF.

Belongs to the RNA polymerase subunit omega family. In terms of assembly, the RNAP catalytic core consists of 2 alpha, 1 beta, 1 beta' and 1 omega subunit. When a sigma factor is associated with the core the holoenzyme is formed, which can initiate transcription.

It catalyses the reaction RNA(n) + a ribonucleoside 5'-triphosphate = RNA(n+1) + diphosphate. In terms of biological role, promotes RNA polymerase assembly. Latches the N- and C-terminal regions of the beta' subunit thereby facilitating its interaction with the beta and alpha subunits. The protein is DNA-directed RNA polymerase subunit omega of Anaplasma phagocytophilum (strain HZ).